We begin with the raw amino-acid sequence, 589 residues long: Kelch-like protein 25 (589 aa).

Positions 46–114 (TDMTLWAGNR…AYSSKIIINE (69 aa)) constitute a BTB domain. The 102-residue stretch at 149–250 (CLGMMILSDA…LPSELLKEAV (102 aa)) folds into the BACK domain. 6 Kelch repeats span residues 296-340 (TLLI…AIGC), 341-388 (KVYI…ELDN), 389-444 (CLYV…SAKL), 446-492 (LFVF…VLGS), 494-538 (IFIM…ASGN), and 539-585 (KVYV…STWK).

Component of the BCR(KLHL25) E3 ubiquitin ligase complex, at least composed of cul3, klhl25 and rbx1.

The protein operates within protein modification; protein ubiquitination. In terms of biological role, substrate-specific adapter of a BCR (BTB-CUL3-RBX1) E3 ubiquitin ligase complex involved in various processes, such as translation homeostasis and lipid synthesis. The BCR(KLHL25) ubiquitin ligase complex acts by mediating ubiquitination of hypophosphorylated eif4ebp1 (4E-BP1): ubiquitination and subsequent degradation of hypophosphorylated EIF4EBP1 (4E-BP1) probably serves as a homeostatic mechanism to maintain translation and prevent eIF4E inhibition when eIF4E levels are low. The BCR(KLHL25) complex also acts as a regulator of lipid synthesis by mediating ubiquitination and degradation of ACLY, thereby inhibiting lipid synthesis. The sequence is that of Kelch-like protein 25 from Xenopus laevis (African clawed frog).